Consider the following 406-residue polypeptide: Nodal homolog (406 aa).

The signal sequence occupies residues 1–18 (MAFLTAVLYLGFACISQG). Residues 19 to 281 (LPTWPDRVES…RVPGIRRHRR (263 aa)) constitute a propeptide that is removed on maturation. 3 N-linked (GlcNAc...) asparagine glycosylation sites follow: Asn-71, Asn-136, and Asn-172. The segment at 195–222 (KERAERGSGMSNAEFIDAPGPSQQYNPH) is disordered. 3 disulfide bridges follow: Cys-306–Cys-372, Cys-335–Cys-403, and Cys-339–Cys-405. An N-linked (GlcNAc...) asparagine glycan is attached at Asn-344.

This sequence belongs to the TGF-beta family. In terms of assembly, homodimer; disulfide-linked. Interacts with, and is inhibited by cer1 and gdf10/bmp3b. In the first phase of expression, localized to the vegetal region of the blastula. During gastrulation (stage 10.5), this expression disappears and instead becomes localized to the dorsal marginal zone, with enrichment in the organizer. During the second phase of expression in neurulae and tailbud embryos, expression restarts firstly in two symmetric patches near the posterior end of the notochord, and then in a large asymmetrical domain in the left lateral plate mesoderm.

Its subcellular location is the secreted. In terms of biological role, cooperation and regulatory loops of multiple nodals are essential for mesendoderm patterning in early embryos. Essential for mesoderm formation and axial patterning during embryonic development. Activates the activin-like signaling pathway to induce dorsal and ventral mesoderm in animal cap ectoderm. In addition, also dorsalizes ventral marginal zone (VMZ) tissues during gastrulation. Acts in a downstream signaling cascade via cripto and cer1 to mediate cardiogenesis in embryonic mesoderm. Directs the orientation of the left-right axis by driving the left-specific gene cascade in the left lateral plate mesoderm. This is Nodal homolog from Xenopus laevis (African clawed frog).